Here is a 276-residue protein sequence, read N- to C-terminus: NADPH-dependent 7-cyano-7-deazaguanine reductase (276 aa).

83-85 (IES) contributes to the substrate binding site. 85–86 (SK) serves as a coordination point for NADPH. C184 acts as the Thioimide intermediate in catalysis. The active-site Proton donor is D191. 223–224 (HE) provides a ligand contact to substrate. 252–253 (RG) serves as a coordination point for NADPH.

This sequence belongs to the GTP cyclohydrolase I family. QueF type 2 subfamily. In terms of assembly, homodimer.

The protein localises to the cytoplasm. The catalysed reaction is 7-aminomethyl-7-carbaguanine + 2 NADP(+) = 7-cyano-7-deazaguanine + 2 NADPH + 3 H(+). It participates in tRNA modification; tRNA-queuosine biosynthesis. Its function is as follows. Catalyzes the NADPH-dependent reduction of 7-cyano-7-deazaguanine (preQ0) to 7-aminomethyl-7-deazaguanine (preQ1). The polypeptide is NADPH-dependent 7-cyano-7-deazaguanine reductase (Pseudomonas entomophila (strain L48)).